A 183-amino-acid polypeptide reads, in one-letter code: Transmembrane protein 52B (183 aa).

The first 24 residues, Met1–Cys24, serve as a signal peptide directing secretion. The helical transmembrane segment at Val40–Leu60 threads the bilayer. The interval Asp158 to Asn183 is disordered. Positions Pro163–Arg177 are enriched in basic and acidic residues.

Its subcellular location is the membrane. The polypeptide is Transmembrane protein 52B (TMEM52B) (Homo sapiens (Human)).